The primary structure comprises 231 residues: Lipoprotein-releasing system ATP-binding protein LolD (231 aa).

An ABC transporter domain is found at 6–231 (LQVQAVSKSY…YLQAVAEHAQ (226 aa)). 42–49 (GTSGSGKS) is an ATP binding site.

The protein belongs to the ABC transporter superfamily. Lipoprotein translocase (TC 3.A.1.125) family. In terms of assembly, the complex is composed of two ATP-binding proteins (LolD) and two transmembrane proteins (LolC and LolE).

It localises to the cell inner membrane. In terms of biological role, part of the ABC transporter complex LolCDE involved in the translocation of mature outer membrane-directed lipoproteins, from the inner membrane to the periplasmic chaperone, LolA. Responsible for the formation of the LolA-lipoprotein complex in an ATP-dependent manner. The protein is Lipoprotein-releasing system ATP-binding protein LolD of Shewanella sp. (strain MR-4).